The chain runs to 293 residues: 4-hydroxybenzoate octaprenyltransferase (293 aa).

A run of 8 helical transmembrane segments spans residues 26–48 (PIGT…GGMP), 98–118 (TEAK…DLLL), 122–142 (TFLL…MKRF), 145–165 (LPQV…YGAV), 167–187 (ESLP…TVAY), 218–238 (IIAL…WISQ), 241–261 (WGYF…CWLT), and 272–292 (AFLN…VGIY).

Belongs to the UbiA prenyltransferase family. Requires Mg(2+) as cofactor.

Its subcellular location is the cell inner membrane. It carries out the reaction all-trans-octaprenyl diphosphate + 4-hydroxybenzoate = 4-hydroxy-3-(all-trans-octaprenyl)benzoate + diphosphate. It participates in cofactor biosynthesis; ubiquinone biosynthesis. Functionally, catalyzes the prenylation of para-hydroxybenzoate (PHB) with an all-trans polyprenyl group. Mediates the second step in the final reaction sequence of ubiquinone-8 (UQ-8) biosynthesis, which is the condensation of the polyisoprenoid side chain with PHB, generating the first membrane-bound Q intermediate 3-octaprenyl-4-hydroxybenzoate. The protein is 4-hydroxybenzoate octaprenyltransferase of Actinobacillus pleuropneumoniae serotype 3 (strain JL03).